The chain runs to 507 residues: Cyclin-dependent kinase-like 2 (507 aa).

In terms of domain architecture, Protein kinase spans 4-289 (YENLGLVGEG…CADLLHHDFF (286 aa)). ATP contacts are provided by residues 10–18 (VGEGSYGMV) and lysine 33. A [NKR]KIAxRE motif is present at residues 45 to 51 (KKIAMRE). Aspartate 126 (proton acceptor) is an active-site residue. The interval 365–392 (KTEKGTRASNGSCLHDNGTSHKGLSSTS) is disordered.

This sequence belongs to the protein kinase superfamily. CMGC Ser/Thr protein kinase family. CDC2/CDKX subfamily.

It is found in the cytoplasm. The protein localises to the nucleus. It carries out the reaction L-seryl-[protein] + ATP = O-phospho-L-seryl-[protein] + ADP + H(+). The catalysed reaction is L-threonyl-[protein] + ATP = O-phospho-L-threonyl-[protein] + ADP + H(+). This Rattus norvegicus (Rat) protein is Cyclin-dependent kinase-like 2.